Consider the following 517-residue polypeptide: Sterol 14-alpha demethylase CYP51C (517 aa).

The chain crosses the membrane as a helical span at residues 10–30 (TLPLSVSIPLTTSIIIILSIV). Lanosterol is bound at residue Y115. Residue G300 participates in itraconazole binding. A heme-binding site is contributed by C458.

Belongs to the cytochrome P450 family. Heme is required as a cofactor.

It is found in the endoplasmic reticulum membrane. Its pathway is steroid metabolism; ergosterol biosynthesis. In terms of biological role, together with cyp51A and cyp51B, encodes the sterol 14alpha-demethylase that plays a critical role in the third module of ergosterol biosynthesis pathway, being ergosterol the major sterol component in fungal membranes that participates in a variety of functions. Cyp51C does not seem to encode an active sterol 14-alpha-demethylase, but can impact indirectly on sterol 14alpha-demethylation, and is required for full virulence on host wheat ears, but not on Arabidopsis floral tissue or the fruits of apple and tomato. The third module or late pathway involves the ergosterol synthesis itself through consecutive reactions that mainly occur in the endoplasmic reticulum (ER) membrane. In filamentous fungi, during the initial step of this module, lanosterol (lanosta-8,24-dien-3beta-ol) can be metabolized to eburicol. Sterol 14alpha-demethylase catalyzes the three-step oxidative removal of the 14alpha-methyl group (C-32) of both these sterols in the form of formate, and converts eburicol and lanosterol to 14-demethyleburicol (4,4,24-trimethylergosta-8,14,24(28)-trienol) and 4,4-dimethyl-5alpha-cholesta-8,14,24-trien-3beta-ol, respectively, which are further metabolized by other enzymes in the pathway to ergosterol. The polypeptide is Sterol 14-alpha demethylase CYP51C (Gibberella zeae (strain ATCC MYA-4620 / CBS 123657 / FGSC 9075 / NRRL 31084 / PH-1) (Wheat head blight fungus)).